The chain runs to 2193 residues: Genome polyprotein (2193 aa).

The segment at methionine 1–glycine 22 is disordered. Glycine 2 carries N-myristoyl glycine; by host lipidation. At glycine 2–glutamine 1503 the chain is on the cytoplasmic side. Amphipathic alpha-helix stretches follow at residues glycine 566–leucine 588 and glycine 568–leucine 588. Residues histidine 883 and aspartate 901 each act as for protease 2A activity in the active site. Zn(2+) contacts are provided by cysteine 918 and cysteine 920. The active-site For protease 2A activity is cysteine 972. 2 residues coordinate Zn(2+): cysteine 978 and histidine 980. The segment at serine 1112 to leucine 1184 is membrane-binding. The interval serine 1112–threonine 1250 is oligomerization. Residues serine 1133 to serine 1137 form an RNA-binding region. The SF3 helicase domain occupies glutamate 1216–alanine 1374. Glycine 1240–serine 1247 serves as a coordination point for ATP. Residues cysteine 1381, cysteine 1392, and cysteine 1397 each contribute to the Zn(2+) site. The C4-type; degenerate zinc finger occupies cysteine 1381–cysteine 1397. The interval glutamate 1424–isoleucine 1431 is RNA-binding. The oligomerization stretch occupies residues isoleucine 1435–glutamine 1440. An intramembrane segment occupies serine 1504–tyrosine 1519. Residues lysine 1520–phenylalanine 2193 lie on the Cytoplasmic side of the membrane. An O-(5'-phospho-RNA)-tyrosine modification is found at tyrosine 1529. In terms of domain architecture, Peptidase C3 spans glycine 1549–phenylalanine 1727. Active-site for protease 3C activity residues include histidine 1588, glutamate 1619, and cysteine 1695. Residues glycine 1958 to leucine 2073 form the RdRp catalytic domain. Residues aspartate 1964 and aspartate 2060 each contribute to the Mg(2+) site.

It belongs to the picornaviruses polyprotein family. Interacts with capsid protein VP1 and capsid protein VP3 to form heterotrimeric protomers. In terms of assembly, interacts with capsid protein VP0, and capsid protein VP3 to form heterotrimeric protomers. Five protomers subsequently associate to form pentamers which serve as building blocks for the capsid. Interacts with capsid protein VP2, capsid protein VP3 and capsid protein VP4 following cleavage of capsid protein VP0. As to quaternary structure, interacts with capsid protein VP1 and capsid protein VP3 in the mature capsid. Interacts with capsid protein VP0 and capsid protein VP1 to form heterotrimeric protomers. Five protomers subsequently associate to form pentamers which serve as building blocks for the capsid. Interacts with capsid protein VP4 in the mature capsid. Interacts with protein 2C; this interaction may be important for virion morphogenesis. In terms of assembly, interacts with capsid protein VP1 and capsid protein VP3. As to quaternary structure, homodimer. Homohexamer; forms a hexameric ring structure with 6-fold symmetry characteristic of AAA+ ATPases. Interacts (via N-terminus) with host RTN3 (via reticulon domain); this interaction is important for viral replication. Interacts with capsid protein VP3; this interaction may be important for virion morphogenesis. In terms of assembly, interacts with protein 3CD. As to quaternary structure, homodimer. Interacts with host GBF1. Interacts (via GOLD domain) with host ACBD3 (via GOLD domain); this interaction allows the formation of a viral protein 3A/ACBD3 heterotetramer with a 2:2 stoichiometry, which will stimulate the recruitment of host PI4KB in order to synthesize PI4P at the viral RNA replication sites. Interacts with RNA-directed RNA polymerase. In terms of assembly, interacts with host IFIH1/MDA5; this interaction inhibits host IFIH1. As to quaternary structure, interacts with protein 3AB and with RNA-directed RNA polymerase. Interacts with Viral protein genome-linked and with protein 3CD. Mg(2+) is required as a cofactor. Post-translationally, specific enzymatic cleavages in vivo by the viral proteases yield processing intermediates and the mature proteins. In terms of processing, myristoylation is required for the formation of pentamers during virus assembly. Further assembly of 12 pentamers and a molecule of genomic RNA generates the provirion. During virion maturation, immature virions are rendered infectious following cleavage of VP0 into VP4 and VP2. This maturation seems to be an autocatalytic event triggered by the presence of RNA in the capsid and it is followed by a conformational change infectious virion. Post-translationally, myristoylation is required during RNA encapsidation and formation of the mature virus particle. In terms of processing, VPg is uridylylated by the polymerase into VPg-pUpU. This acts as a nucleotide-peptide primer for the genomic RNA replication.

The protein resides in the virion. The protein localises to the host cytoplasm. It is found in the host cytoplasmic vesicle membrane. It localises to the host nucleus. The enzyme catalyses a ribonucleoside 5'-triphosphate + H2O = a ribonucleoside 5'-diphosphate + phosphate + H(+). It carries out the reaction Selective cleavage of Tyr-|-Gly bond in the picornavirus polyprotein.. The catalysed reaction is RNA(n) + a ribonucleoside 5'-triphosphate = RNA(n+1) + diphosphate. It catalyses the reaction Selective cleavage of Gln-|-Gly bond in the poliovirus polyprotein. In other picornavirus reactions Glu may be substituted for Gln, and Ser or Thr for Gly.. Replication or transcription is subject to high level of random mutations by the nucleotide analog ribavirin. Its function is as follows. Forms an icosahedral capsid of pseudo T=3 symmetry with capsid proteins VP2 and VP3. The capsid is 300 Angstroms in diameter, composed of 60 copies of each capsid protein and enclosing the viral positive strand RNA genome. Capsid protein VP1 mainly forms the vertices of the capsid. Capsid protein VP1 interacts with host cell receptor to provide virion attachment to target host cells. This attachment induces virion internalization. After binding to its receptor, the capsid undergoes conformational changes. Capsid protein VP1 N-terminus (that contains an amphipathic alpha-helix) and capsid protein VP4 are externalized. Together, they shape a pore in the host membrane through which viral genome is translocated to host cell cytoplasm. Forms an icosahedral capsid of pseudo T=3 symmetry with capsid proteins VP2 and VP3. The capsid is 300 Angstroms in diameter, composed of 60 copies of each capsid protein and enclosing the viral positive strand RNA genome. In terms of biological role, lies on the inner surface of the capsid shell. After binding to the host receptor, the capsid undergoes conformational changes. Capsid protein VP4 is released, Capsid protein VP1 N-terminus is externalized, and together, they shape a pore in the host membrane through which the viral genome is translocated into the host cell cytoplasm. Functionally, component of immature procapsids, which is cleaved into capsid proteins VP4 and VP2 after maturation. Allows the capsid to remain inactive before the maturation step. Its function is as follows. Cysteine protease that cleaves viral polyprotein and specific host proteins. It is responsible for the autocatalytic cleavage between the P1 and P2 regions, which is the first cleavage occurring in the polyprotein. Also cleaves the host translation initiation factor EIF4G1, in order to shut down the capped cellular mRNA translation. Inhibits the host nucleus-cytoplasm protein and RNA trafficking by cleaving host members of the nuclear pores. Counteracts stress granule formation probably by antagonizing its assembly or promoting its dissassembly. Cleaves and inhibits host IFIH1/MDA5, thereby inhibiting the type-I IFN production and the establishment of the antiviral state. Cleaves and inhibits host MAVS, thereby inhibiting the type-I IFN production and the establishment of the antiviral state. Plays an essential role in the virus replication cycle by acting as a viroporin. Creates a pore in the host endoplasmic reticulum and as a consequence releases Ca2+ in the cytoplasm of infected cell. In turn, high levels of cytoplasmic calcium may trigger membrane trafficking and transport of viral ER-associated proteins to viroplasms, sites of viral genome replication. In terms of biological role, induces and associates with structural rearrangements of intracellular membranes. Displays RNA-binding, nucleotide binding and NTPase activities. May play a role in virion morphogenesis and viral RNA encapsidation by interacting with the capsid protein VP3. Functionally, localizes the viral replication complex to the surface of membranous vesicles. Together with protein 3CD binds the Cis-Active RNA Element (CRE) which is involved in RNA synthesis initiation. Acts as a cofactor to stimulate the activity of 3D polymerase, maybe through a nucleid acid chaperone activity. Its function is as follows. Localizes the viral replication complex to the surface of membranous vesicles. It inhibits host cell endoplasmic reticulum-to-Golgi apparatus transport and causes the disassembly of the Golgi complex, possibly through GBF1 interaction. This would result in depletion of MHC, trail receptors and IFN receptors at the host cell surface. Plays an essential role in viral RNA replication by recruiting ACBD3 and PI4KB at the viral replication sites, thereby allowing the formation of the rearranged membranous structures where viral replication takes place. Acts as a primer for viral RNA replication and remains covalently bound to viral genomic RNA. VPg is uridylylated prior to priming replication into VPg-pUpU. The oriI viral genomic sequence may act as a template for this. The VPg-pUpU is then used as primer on the genomic RNA poly(A) by the RNA-dependent RNA polymerase to replicate the viral genome. During genome replication, the VPg-RNA linkage is removed by the host TDP2, thereby accelerating replication. During the late stage of the replication cycle, host TDP2 is excluded from sites of viral RNA synthesis and encapsidation, allowing for the generation of progeny virions. In terms of biological role, involved in the viral replication complex and viral polypeptide maturation. It exhibits protease activity with a specificity and catalytic efficiency that is different from protease 3C. Protein 3CD lacks polymerase activity. Protein 3CD binds to the 5'UTR of the viral genome. Functionally, major viral protease that mediates proteolytic processing of the polyprotein. Cleaves host EIF5B, contributing to host translation shutoff. Also cleaves host PABPC1, contributing to host translation shutoff. Binds and inhibits host IFIH1/MDA5, thereby inhibiting the type-I IFN production and the establishment of the antiviral state. Cleaves host MAP3K7/TAK1, resulting in inhibition of TRAF6-triggered NF-kappa-B induction. Cleaves host NLRP1, triggers host N-glycine-mediated degradation of the autoinhibitory NLRP1 N-terminal fragment. Its function is as follows. Replicates the viral genomic RNA on the surface of intracellular membranes. May form linear arrays of subunits that propagate along a strong head-to-tail interaction called interface-I. Covalently attaches UMP to a tyrosine of VPg, which is used to prime RNA synthesis. The positive stranded RNA genome is first replicated at virus induced membranous vesicles, creating a dsRNA genomic replication form. This dsRNA is then used as template to synthesize positive stranded RNA genomes. ss(+)RNA genomes are either translated, replicated or encapsidated. The protein is Genome polyprotein of Homo sapiens (Human).